The sequence spans 340 residues: Uroporphyrinogen decarboxylase (340 aa).

Substrate contacts are provided by residues 23-27, D72, Y147, T202, and H316; that span reads RQAGR.

The protein belongs to the uroporphyrinogen decarboxylase family. Homodimer.

It localises to the cytoplasm. The catalysed reaction is uroporphyrinogen III + 4 H(+) = coproporphyrinogen III + 4 CO2. It participates in porphyrin-containing compound metabolism; protoporphyrin-IX biosynthesis; coproporphyrinogen-III from 5-aminolevulinate: step 4/4. Functionally, catalyzes the decarboxylation of four acetate groups of uroporphyrinogen-III to yield coproporphyrinogen-III. This chain is Uroporphyrinogen decarboxylase, found in Geobacter metallireducens (strain ATCC 53774 / DSM 7210 / GS-15).